A 360-amino-acid chain; its full sequence is Peptide chain release factor 1 (360 aa).

Gln235 is modified (N5-methylglutamine). The interval 284-304 (KVDSERSADRKSQVGSGDRSE) is disordered.

Belongs to the prokaryotic/mitochondrial release factor family. Post-translationally, methylated by PrmC. Methylation increases the termination efficiency of RF1.

Its subcellular location is the cytoplasm. Its function is as follows. Peptide chain release factor 1 directs the termination of translation in response to the peptide chain termination codons UAG and UAA. This is Peptide chain release factor 1 from Agrobacterium fabrum (strain C58 / ATCC 33970) (Agrobacterium tumefaciens (strain C58)).